A 134-amino-acid chain; its full sequence is Complexin-1 (134 aa).

2 disordered regions span residues Met-1–Glu-60 and Lys-74–Asp-113. Basic and acidic residues predominate over residues Asp-15–Glu-60. Residues Asp-29–Lys-69 adopt a coiled-coil conformation. The segment at Arg-48–Tyr-70 is interaction with the SNARE complex.

The protein belongs to the complexin/synaphin family. As to quaternary structure, binds to the SNARE core complex containing SNAP25, VAMP2 and STX1A. In terms of tissue distribution, nervous system. In hippocampus and cerebellum, expressed mainly by inhibitory neurons. Overexpressed in substantia nigra from patients with Parkinson disease.

Its subcellular location is the cytoplasm. It localises to the cytosol. The protein resides in the perikaryon. The protein localises to the presynapse. Positively regulates a late step in exocytosis of various cytoplasmic vesicles, such as synaptic vesicles and other secretory vesicles. Organizes the SNAREs into a cross-linked zigzag topology that, when interposed between the vesicle and plasma membranes, is incompatible with fusion, thereby preventing SNAREs from releasing neurotransmitters until an action potential arrives at the synapse. Also involved in glucose-induced secretion of insulin by pancreatic beta-cells. Essential for motor behavior. The chain is Complexin-1 (CPLX1) from Homo sapiens (Human).